The sequence spans 567 residues: Low-affinity glucose transporter HXT3 (567 aa).

Residues 1-29 (MNSTPDLISPQKSSENSNADLPSNSSQVM) are compositionally biased toward polar residues. Positions 1-30 (MNSTPDLISPQKSSENSNADLPSNSSQVMN) are disordered. At 1–57 (MNSTPDLISPQKSSENSNADLPSNSSQVMNMPEEKGVQDDFQAEADQVLTNPNTGKG) the chain is on the cytoplasmic side. Serine 23 is modified (phosphoserine). A helical transmembrane segment spans residues 58-78 (AYVTVSICCVMVAFGGFVFGW). The Extracellular segment spans residues 79–113 (DTGTISGFVAQTDFLRRFGMKHKDGSYYLSKVRTG). Residues 114–134 (LIVSIFNIGCAIGGIILAKLG) traverse the membrane as a helical segment. The Cytoplasmic portion of the chain corresponds to 135–140 (DMYGRK). A helical transmembrane segment spans residues 141-161 (MGLIVVVVIYIIGIIIQIASI). Residues 162 to 171 (NKWYQYFIGR) lie on the Extracellular side of the membrane. Residues 172-192 (IISGLGVGGIAVLSPMLISEV) traverse the membrane as a helical segment. The Cytoplasmic segment spans residues 193–198 (APKEMR). A helical transmembrane segment spans residues 199-219 (GTLVSCYQLMITLGIFLGYCT). Topologically, residues 220–233 (NFGTKNYSNSVQWR) are extracellular. Asparagine 225 is a glycosylation site (N-linked (GlcNAc...) asparagine). A helical membrane pass occupies residues 234 to 254 (VPLGLCFAWALFMIGGMTFVP). Over 255 to 337 (ESPRYLVEAG…IQSLQQLTGD (83 aa)) the chain is Cytoplasmic. A helical membrane pass occupies residues 338-354 (NYFFYYGTTVFNAVGMS). Over 355 to 360 (DSFETS) the chain is Extracellular. A helical membrane pass occupies residues 361-378 (IVFGVVNFFSTCCSLYTV). Topologically, residues 379–385 (DRFGRRN) are cytoplasmic. A helical membrane pass occupies residues 386–406 (CLLYGAIGMVCCYVVYASVGV). At 407 to 428 (TRLWPNGEGNGSSKGAGNCMIV) the chain is on the extracellular side. N-linked (GlcNAc...) asparagine glycosylation occurs at asparagine 416. The helical transmembrane segment at 429–449 (FACFYIFCFATTWAPIAYVVI) threads the bilayer. Topologically, residues 450 to 466 (SETFPLRVKSKAMSIAT) are cytoplasmic. Residues 467–487 (AANWLWGFLIGFFTPFITGAI) traverse the membrane as a helical segment. Residue asparagine 488 is a topological domain, extracellular. Residues 489 to 509 (FYYGYVFMGCMVFAYFYVFFF) traverse the membrane as a helical segment. Residues 510 to 567 (VPETKGLTLEEVNDMYAEGVLPWKSASWVPTSQRGANYDADALMHDDQPFYKKMFGKK) lie on the Cytoplasmic side of the membrane.

The protein belongs to the major facilitator superfamily. Sugar transporter (TC 2.A.1.1) family.

It is found in the membrane. Its function is as follows. Low-affinity glucose transporter. The sequence is that of Low-affinity glucose transporter HXT3 (HXT3) from Saccharomyces cerevisiae (strain ATCC 204508 / S288c) (Baker's yeast).